Here is a 430-residue protein sequence, read N- to C-terminus: UPF0597 protein DSY1109 (430 aa).

The protein belongs to the UPF0597 family.

This is UPF0597 protein DSY1109 from Desulfitobacterium hafniense (strain Y51).